A 383-amino-acid chain; its full sequence is Na(+)/H(+) antiporter NhaA (383 aa).

Helical transmembrane passes span 14–34, 47–67, 87–107, 117–137, 146–166, 171–191, 205–225, 252–272, 280–300, 321–341, and 356–376; these read AGGILLVIAAAIAMTIANSPL, FGMSVSHWINDGLMAVFFLLI, IFPAIAAVGGMLAPALIYVAF, GWAIPAATDIAFALGIMALLG, VFLLALAIIDDLGVVVIIALF, LSSMALLVGFVMTGVLFMLNA, AILWFAVLKSGVHATLAGVVI, VAFGILPLFAFANAGISLEGV, MLPLGIALGLLIGKPLGIFSF, IFAVSVLCGIGFTMSIFISSL, and LGILMGSTTAAVLGYALLHFS.

This sequence belongs to the NhaA Na(+)/H(+) (TC 2.A.33) antiporter family.

The protein resides in the cell inner membrane. It catalyses the reaction Na(+)(in) + 2 H(+)(out) = Na(+)(out) + 2 H(+)(in). The catalysed reaction is Li(+)(in) + 2 H(+)(out) = Li(+)(out) + 2 H(+)(in). Its activity is regulated as follows. Activity is regulated by pH. Active at alkaline pH. Amiloride strongly reduces affinity for Na(+), but does not change the Vmax. Functionally, na(+)/H(+) antiporter that extrudes sodium in exchange for external protons. Can also transport lithium and potassium. The chain is Na(+)/H(+) antiporter NhaA from Vibrio parahaemolyticus serotype O3:K6 (strain RIMD 2210633).